A 209-amino-acid chain; its full sequence is Ribosomal RNA large subunit methyltransferase E (209 aa).

S-adenosyl-L-methionine is bound by residues G63, W65, D83, D99, and D124. Residue K164 is the Proton acceptor of the active site.

Belongs to the class I-like SAM-binding methyltransferase superfamily. RNA methyltransferase RlmE family.

It localises to the cytoplasm. It carries out the reaction uridine(2552) in 23S rRNA + S-adenosyl-L-methionine = 2'-O-methyluridine(2552) in 23S rRNA + S-adenosyl-L-homocysteine + H(+). Specifically methylates the uridine in position 2552 of 23S rRNA at the 2'-O position of the ribose in the fully assembled 50S ribosomal subunit. The sequence is that of Ribosomal RNA large subunit methyltransferase E from Shewanella amazonensis (strain ATCC BAA-1098 / SB2B).